The sequence spans 318 residues: Ribonuclease Z (318 aa).

His-63, His-65, Asp-67, His-68, His-142, Asp-213, and His-273 together coordinate Zn(2+). The Proton acceptor role is filled by Asp-67.

It belongs to the RNase Z family. Homodimer. Zn(2+) is required as a cofactor.

It carries out the reaction Endonucleolytic cleavage of RNA, removing extra 3' nucleotides from tRNA precursor, generating 3' termini of tRNAs. A 3'-hydroxy group is left at the tRNA terminus and a 5'-phosphoryl group is left at the trailer molecule.. Its function is as follows. Zinc phosphodiesterase, which displays some tRNA 3'-processing endonuclease activity. Probably involved in tRNA maturation, by removing a 3'-trailer from precursor tRNA. This chain is Ribonuclease Z, found in Leuconostoc mesenteroides subsp. mesenteroides (strain ATCC 8293 / DSM 20343 / BCRC 11652 / CCM 1803 / JCM 6124 / NCDO 523 / NBRC 100496 / NCIMB 8023 / NCTC 12954 / NRRL B-1118 / 37Y).